The following is a 363-amino-acid chain: tRNA(Met) cytidine acetate ligase (363 aa).

Residues 7-20 (IAEF…HKYL), G96, N152, and R175 contribute to the ATP site.

Belongs to the TmcAL family.

Its subcellular location is the cytoplasm. The catalysed reaction is cytidine(34) in elongator tRNA(Met) + acetate + ATP = N(4)-acetylcytidine(34) in elongator tRNA(Met) + AMP + diphosphate. Its function is as follows. Catalyzes the formation of N(4)-acetylcytidine (ac(4)C) at the wobble position of elongator tRNA(Met), using acetate and ATP as substrates. First activates an acetate ion to form acetyladenylate (Ac-AMP) and then transfers the acetyl group to tRNA to form ac(4)C34. The polypeptide is tRNA(Met) cytidine acetate ligase (Streptococcus thermophilus (strain CNRZ 1066)).